Reading from the N-terminus, the 355-residue chain is MGAMGVNFLAGDIGGTKTILALVTINESSPGLARPVTLFEQTYSSPAFPDLVPMVQQFRQEAAFVLGNPISVAKACFAIAGPVIDNTCRLTNLDWHLSGDRLAQELAIAQVDLINDFAAVGYGILGLGSEDLTVLQAAPVDPSGAIAILGAGTGLGQCYVIPQGQGRYRVFASEGAHGDFAPRSPLEWQLLEYLKKKYSLGRISIERVVSGMGIAMIYEFLRHQYPERESAQFSKLYQTWNREKDQETKTVDLAAAVSQAALEGTDVLADQAMELFLGAYGAEAGNLALKLLPRGGLYVAGGIAPKIIPLLEKGSFMQGFSDKGRMQSLMGTIPVQVVLNAKVGLIGAAVCAAQS.

11-16 (GDIGGT) provides a ligand contact to ATP.

The protein belongs to the bacterial glucokinase family.

Its subcellular location is the cytoplasm. It catalyses the reaction D-glucose + ATP = D-glucose 6-phosphate + ADP + H(+). The protein is Glucokinase of Synechocystis sp. (strain ATCC 27184 / PCC 6803 / Kazusa).